Here is a 382-residue protein sequence, read N- to C-terminus: Cytochrome b (382 aa).

The next 4 membrane-spanning stretches (helical) occupy residues 33–53 (FGSL…FLAM), 77–98 (WLVR…YTHI), 113–133 (WTVG…GYVL), and 178–198 (FFAF…IHLL). Positions 83 and 97 each coordinate heme b. The heme b site is built by His-182 and His-196. His-201 serves as a coordination point for a ubiquinone. A run of 4 helical transmembrane segments spans residues 226–246 (LKDL…ALLT), 288–308 (LGGV…PFLQ), 320–340 (LTQL…WIGG), and 347–367 (FVSI…IIIP).

Belongs to the cytochrome b family. In terms of assembly, the cytochrome bc1 complex contains 3 respiratory subunits (MT-CYB, CYC1 and UQCRFS1), 2 core proteins (UQCRC1 and UQCRC2) and probably 6 low-molecular weight proteins. Requires heme b as cofactor.

Its subcellular location is the mitochondrion inner membrane. Functionally, component of the ubiquinol-cytochrome c reductase complex (complex III or cytochrome b-c1 complex) that is part of the mitochondrial respiratory chain. The b-c1 complex mediates electron transfer from ubiquinol to cytochrome c. Contributes to the generation of a proton gradient across the mitochondrial membrane that is then used for ATP synthesis. The polypeptide is Cytochrome b (mt-cyb) (Sigmops gracilis (Slender fangjaw)).